We begin with the raw amino-acid sequence, 84 residues long: M-zodatoxin-Lt2a (84 aa).

An N-terminal signal peptide occupies residues 1–22 (MKYFVIALALAVALVCIAESTA). A propeptide spanning residues 23 to 58 (YEVNEELENELDDLDDAAWLAVAEELQGLEDFEESR) is cleaved from the precursor. Residues 55–58 (EESR) carry the Processing quadruplet motif motif.

In terms of processing, cleavage of the propeptide depends on the processing quadruplet motif (XXXR, with at least one of X being E). In terms of tissue distribution, expressed by the venom gland.

It is found in the secreted. It has antimicrobial activity against Gram-positive bacteria (A.globiformis VKM Ac-1112 (MIC=0.7 uM), and B.subtilis VKM B-501 (MIC=0.4 uM)), Gram-negative bacteria (E.coli DH5-alpha (MIC=1.0 uM), E.coli MH1 (MIC=0.7 uM), and P.aeruginosa PAO1 (MIC=6.7 uM)), and yeasts (P.pastoris GS115 (MIC=6.7 uM), and S.cerevisiae Y190 (MIC=54 uM)). Also has a strong hemolytic activity against rabbit erythrocytes. Causes paralysis, but is not lethal when injected into insect (M.domestica) larvae. This Lachesana tarabaevi (Spider) protein is M-zodatoxin-Lt2a.